The following is a 226-amino-acid chain: Enolase-phosphatase E1 (226 aa).

2 residues coordinate Mg(2+): Asp-9 and Glu-11. Substrate contacts are provided by residues 115 to 116 and Lys-160; that span reads SS. Asp-185 is a binding site for Mg(2+).

Belongs to the HAD-like hydrolase superfamily. MasA/MtnC family. Monomer. Mg(2+) serves as cofactor.

Its subcellular location is the cytoplasm. The protein localises to the nucleus. The catalysed reaction is 5-methylsulfanyl-2,3-dioxopentyl phosphate + H2O = 1,2-dihydroxy-5-(methylsulfanyl)pent-1-en-3-one + phosphate. It functions in the pathway amino-acid biosynthesis; L-methionine biosynthesis via salvage pathway; L-methionine from S-methyl-5-thio-alpha-D-ribose 1-phosphate: step 3/6. Its pathway is amino-acid biosynthesis; L-methionine biosynthesis via salvage pathway; L-methionine from S-methyl-5-thio-alpha-D-ribose 1-phosphate: step 4/6. Functionally, bifunctional enzyme that catalyzes the enolization of 2,3-diketo-5-methylthiopentyl-1-phosphate (DK-MTP-1-P) into the intermediate 2-hydroxy-3-keto-5-methylthiopentenyl-1-phosphate (HK-MTPenyl-1-P), which is then dephosphorylated to form the acireductone 1,2-dihydroxy-3-keto-5-methylthiopentene (DHK-MTPene). This Zygosaccharomyces rouxii (strain ATCC 2623 / CBS 732 / NBRC 1130 / NCYC 568 / NRRL Y-229) protein is Enolase-phosphatase E1.